The following is a 483-amino-acid chain: Altronate oxidoreductase (483 aa).

18 to 29 (IIQFGEGNFLRA) is an NAD(+) binding site.

This sequence belongs to the mannitol dehydrogenase family. UxaB subfamily.

The catalysed reaction is D-altronate + NAD(+) = keto-D-tagaturonate + NADH + H(+). It functions in the pathway carbohydrate metabolism; pentose and glucuronate interconversion. The polypeptide is Altronate oxidoreductase (Escherichia coli (strain 55989 / EAEC)).